Consider the following 313-residue polypeptide: Ribosomal protein L11 methyltransferase (313 aa).

The S-adenosyl-L-methionine site is built by T151, G172, D194, and N245.

The protein belongs to the methyltransferase superfamily. PrmA family.

Its subcellular location is the cytoplasm. The catalysed reaction is L-lysyl-[protein] + 3 S-adenosyl-L-methionine = N(6),N(6),N(6)-trimethyl-L-lysyl-[protein] + 3 S-adenosyl-L-homocysteine + 3 H(+). Its function is as follows. Methylates ribosomal protein L11. This Nitrosomonas europaea (strain ATCC 19718 / CIP 103999 / KCTC 2705 / NBRC 14298) protein is Ribosomal protein L11 methyltransferase.